Consider the following 29-residue polypeptide: Conotoxin pr6a (29 aa).

Disulfide bonds link Cys2–Cys20, Cys9–Cys24, and Cys19–Cys28.

In terms of tissue distribution, expressed by the venom duct.

Its subcellular location is the secreted. In terms of biological role, intraperitoneal injection into fish (1 nmol) provokes hyperactivity and erratic swimming in various directions after 14 minutes. The polypeptide is Conotoxin pr6a (Conus parius (Cone snail)).